Here is a 345-residue protein sequence, read N- to C-terminus: Holliday junction branch migration complex subunit RuvB (345 aa).

The large ATPase domain (RuvB-L) stretch occupies residues 1-182; sequence MDQRIIASSS…FGIVQRLEFY (182 aa). ATP contacts are provided by residues isoleucine 21, arginine 22, glycine 63, lysine 66, threonine 67, threonine 68, 129-131, arginine 172, tyrosine 182, and arginine 219; that span reads EDF. Threonine 67 lines the Mg(2+) pocket. The small ATPAse domain (RuvB-S) stretch occupies residues 183–253; the sequence is SPQELTRIVI…VAQAAMQMLK (71 aa). The head domain (RuvB-H) stretch occupies residues 256–345; that stretch reads PEGFDELDRR…PGIGEPGDLF (90 aa). DNA contacts are provided by arginine 292, arginine 311, and arginine 316.

Belongs to the RuvB family. In terms of assembly, homohexamer. Forms an RuvA(8)-RuvB(12)-Holliday junction (HJ) complex. HJ DNA is sandwiched between 2 RuvA tetramers; dsDNA enters through RuvA and exits via RuvB. An RuvB hexamer assembles on each DNA strand where it exits the tetramer. Each RuvB hexamer is contacted by two RuvA subunits (via domain III) on 2 adjacent RuvB subunits; this complex drives branch migration. In the full resolvosome a probable DNA-RuvA(4)-RuvB(12)-RuvC(2) complex forms which resolves the HJ.

Its subcellular location is the cytoplasm. The enzyme catalyses ATP + H2O = ADP + phosphate + H(+). Functionally, the RuvA-RuvB-RuvC complex processes Holliday junction (HJ) DNA during genetic recombination and DNA repair, while the RuvA-RuvB complex plays an important role in the rescue of blocked DNA replication forks via replication fork reversal (RFR). RuvA specifically binds to HJ cruciform DNA, conferring on it an open structure. The RuvB hexamer acts as an ATP-dependent pump, pulling dsDNA into and through the RuvAB complex. RuvB forms 2 homohexamers on either side of HJ DNA bound by 1 or 2 RuvA tetramers; 4 subunits per hexamer contact DNA at a time. Coordinated motions by a converter formed by DNA-disengaged RuvB subunits stimulates ATP hydrolysis and nucleotide exchange. Immobilization of the converter enables RuvB to convert the ATP-contained energy into a lever motion, pulling 2 nucleotides of DNA out of the RuvA tetramer per ATP hydrolyzed, thus driving DNA branch migration. The RuvB motors rotate together with the DNA substrate, which together with the progressing nucleotide cycle form the mechanistic basis for DNA recombination by continuous HJ branch migration. Branch migration allows RuvC to scan DNA until it finds its consensus sequence, where it cleaves and resolves cruciform DNA. This chain is Holliday junction branch migration complex subunit RuvB, found in Xanthomonas oryzae pv. oryzae (strain MAFF 311018).